Reading from the N-terminus, the 476-residue chain is Cytochrome c oxidase subunit 1 (476 aa).

Residues L19–L39 traverse the membrane as a helical segment. Position 42 (E42) interacts with Ca(2+). A run of 8 helical transmembrane segments spans residues M61–G81, I105–F125, L144–I164, L194–M214, L240–I260, M278–Y298, F309–L329, and L345–G365. H66 contacts Fe(II)-heme a. H246 contacts Cu cation. Positions H246–Y250 form a cross-link, 1'-histidyl-3'-tyrosine (His-Tyr). Y250 is an O2 binding site. The Cu cation site is built by H295 and H296. H374 and D375 together coordinate Mg(2+). The next 2 helical transmembrane spans lie at V379 to V399 and T415 to M435. A heme a3-binding site is contributed by H382. H384 lines the Fe(II)-heme a pocket. Residue P448 participates in Ca(2+) binding. The chain crosses the membrane as a helical span at residues N455 to F475.

The protein belongs to the heme-copper respiratory oxidase family. In terms of assembly, component of the cytochrome c oxidase (complex IV, CIV), a multisubunit enzyme composed of a catalytic core of 3 subunits and several supernumerary subunits. The complex exists as a monomer or a dimer and forms supercomplexes (SCs) in the inner mitochondrial membrane with ubiquinol-cytochrome c oxidoreductase (cytochrome b-c1 complex, complex III, CIII). Requires heme as cofactor. It depends on Cu cation as a cofactor.

It localises to the mitochondrion inner membrane. The enzyme catalyses 4 Fe(II)-[cytochrome c] + O2 + 8 H(+)(in) = 4 Fe(III)-[cytochrome c] + 2 H2O + 4 H(+)(out). The protein operates within energy metabolism; oxidative phosphorylation. Its function is as follows. Component of the cytochrome c oxidase, the last enzyme in the mitochondrial electron transport chain which drives oxidative phosphorylation. The respiratory chain contains 3 multisubunit complexes succinate dehydrogenase (complex II, CII), ubiquinol-cytochrome c oxidoreductase (cytochrome b-c1 complex, complex III, CIII) and cytochrome c oxidase (complex IV, CIV), that cooperate to transfer electrons derived from NADH and succinate to molecular oxygen, creating an electrochemical gradient over the inner membrane that drives transmembrane transport and the ATP synthase. Cytochrome c oxidase is the component of the respiratory chain that catalyzes the reduction of oxygen to water. Electrons originating from reduced cytochrome c in the intermembrane space (IMS) are transferred via the dinuclear copper A center (CU(A)) of subunit 2 and heme A of subunit 1 to the active site in subunit 1, a binuclear center (BNC) formed by heme A3 and copper B (CU(B)). The BNC reduces molecular oxygen to 2 water molecules using 4 electrons from cytochrome c in the IMS and 4 protons from the mitochondrial matrix. The protein is Cytochrome c oxidase subunit 1 (COI) of Plasmodium chabaudi.